The primary structure comprises 156 residues: Ribosomal RNA large subunit methyltransferase H (156 aa).

Residues Leu73, Gly104, and 123 to 128 (LSSLTL) contribute to the S-adenosyl-L-methionine site.

This sequence belongs to the RNA methyltransferase RlmH family. As to quaternary structure, homodimer.

The protein resides in the cytoplasm. It carries out the reaction pseudouridine(1915) in 23S rRNA + S-adenosyl-L-methionine = N(3)-methylpseudouridine(1915) in 23S rRNA + S-adenosyl-L-homocysteine + H(+). Specifically methylates the pseudouridine at position 1915 (m3Psi1915) in 23S rRNA. This Bordetella petrii (strain ATCC BAA-461 / DSM 12804 / CCUG 43448) protein is Ribosomal RNA large subunit methyltransferase H.